A 66-amino-acid chain; its full sequence is Muscarinic toxin 4 (66 aa).

4 disulfide bridges follow: Cys3–Cys24, Cys17–Cys42, Cys46–Cys58, and Cys59–Cys64.

The protein belongs to the three-finger toxin family. Short-chain subfamily. Aminergic toxin sub-subfamily. Monomer. In terms of tissue distribution, expressed by the venom gland.

Its subcellular location is the secreted. Its function is as follows. Binds to the muscarinic acetylcholine receptor (CHRM). This Dendroaspis angusticeps (Eastern green mamba) protein is Muscarinic toxin 4.